The chain runs to 428 residues: Kynureninase (428 aa).

Pyridoxal 5'-phosphate contacts are provided by residues Thr-104, Thr-105, 132-135 (FPSD), Asp-213, His-216, and Tyr-238. At Lys-239 the chain carries N6-(pyridoxal phosphate)lysine. Trp-267 and Thr-295 together coordinate pyridoxal 5'-phosphate.

This sequence belongs to the kynureninase family. Homodimer. Requires pyridoxal 5'-phosphate as cofactor.

It catalyses the reaction L-kynurenine + H2O = anthranilate + L-alanine + H(+). It carries out the reaction 3-hydroxy-L-kynurenine + H2O = 3-hydroxyanthranilate + L-alanine + H(+). The protein operates within amino-acid degradation; L-kynurenine degradation; L-alanine and anthranilate from L-kynurenine: step 1/1. It functions in the pathway cofactor biosynthesis; NAD(+) biosynthesis; quinolinate from L-kynurenine: step 2/3. In terms of biological role, catalyzes the cleavage of L-kynurenine (L-Kyn) and L-3-hydroxykynurenine (L-3OHKyn) into anthranilic acid (AA) and 3-hydroxyanthranilic acid (3-OHAA), respectively. The polypeptide is Kynureninase (Geobacillus thermodenitrificans (strain NG80-2)).